A 693-amino-acid chain; its full sequence is Cyclin-dependent kinase G-1 (693 aa).

Residues 1-10 (MAAGSHGGYR) are compositionally biased toward gly residues. Disordered regions lie at residues 1–148 (MAAG…ARDP) and 236–308 (KKKK…DDYP). The span at 13 to 24 (EVAREREHDVGV) shows a compositional bias: basic and acidic residues. The span at 26 to 39 (RRSKEHYHHRHPSR) shows a compositional bias: basic residues. 3 stretches are compositionally biased toward basic and acidic residues: residues 40 to 54 (HRDS…RSGG), 75 to 87 (RPSE…REPG), and 97 to 122 (RSGE…EEAK). Residues 268-284 (SVRSSSRSSDSGVLQGS) show a composition bias toward low complexity. The segment covering 287 to 304 (RDLEVEKGDNIDVEKAAD) has biased composition (basic and acidic residues). One can recognise a Protein kinase domain in the interval 349 to 640 (FERLNTINEG…AEDALNHEWF (292 aa)). ATP-binding positions include 355–363 (INEGTYGVV) and Lys-378. Phosphothreonine is present on Thr-359. Tyr-360 carries the phosphotyrosine modification. Asp-473 acts as the Proton acceptor in catalysis. Phosphoserine is present on Ser-500. Residue Thr-506 is modified to Phosphothreonine. The tract at residues 664–693 (RFKKHMKSPDPLEEQWMKEQGNNGDRGLFG) is disordered.

It belongs to the protein kinase superfamily. CMGC Ser/Thr protein kinase family. CDC2/CDKX subfamily.

It catalyses the reaction L-seryl-[protein] + ATP = O-phospho-L-seryl-[protein] + ADP + H(+). The enzyme catalyses L-threonyl-[protein] + ATP = O-phospho-L-threonyl-[protein] + ADP + H(+). It carries out the reaction [DNA-directed RNA polymerase] + ATP = phospho-[DNA-directed RNA polymerase] + ADP + H(+). In Oryza sativa subsp. indica (Rice), this protein is Cyclin-dependent kinase G-1 (CDKG-1).